Reading from the N-terminus, the 71-residue chain is Virion membrane protein A13 homolog (71 aa).

The chain crosses the membrane as a helical span at residues Met-1 to Ile-21. The Virion surface portion of the chain corresponds to Tyr-22–Ser-70.

It belongs to the chordopoxvirinae A13 family.

It localises to the virion membrane. Functionally, essential for the encapsidation of DNA into immature virions (IV) and the subsequent maturation of IV into mature virions (MV). The sequence is that of Virion membrane protein A13 homolog from Vertebrata (FPV).